The chain runs to 430 residues: Adenylosuccinate synthetase (430 aa).

Residues 13–19 (GDEGKGK) and 41–43 (GHT) each bind GTP. Asp14 (proton acceptor) is an active-site residue. Asp14 and Gly41 together coordinate Mg(2+). IMP-binding positions include 14 to 17 (DEGK), 39 to 42 (NAGH), Thr130, Arg144, Gln225, Thr240, and Arg304. His42 serves as the catalytic Proton donor. 300-306 (ASTGRPR) is a substrate binding site. Residues Arg306, 332–334 (KLD), and 414–416 (STG) contribute to the GTP site.

The protein belongs to the adenylosuccinate synthetase family. As to quaternary structure, homodimer. Mg(2+) is required as a cofactor.

The protein localises to the cytoplasm. It catalyses the reaction IMP + L-aspartate + GTP = N(6)-(1,2-dicarboxyethyl)-AMP + GDP + phosphate + 2 H(+). Its pathway is purine metabolism; AMP biosynthesis via de novo pathway; AMP from IMP: step 1/2. Its function is as follows. Plays an important role in the de novo pathway of purine nucleotide biosynthesis. Catalyzes the first committed step in the biosynthesis of AMP from IMP. This Xanthomonas axonopodis pv. citri (strain 306) protein is Adenylosuccinate synthetase.